A 372-amino-acid polypeptide reads, in one-letter code: Cytoplasmic tRNA 2-thiolation protein 1 (372 aa).

Residues 335 to 372 form a disordered region; that stretch reads GKKEDGGCGSGGGGCGCAGAADETENEETRKRLKDLQF. Gly residues predominate over residues 341-351; the sequence is GCGSGGGGCGC. Residues 361–372 are compositionally biased toward basic and acidic residues; the sequence is EETRKRLKDLQF.

This sequence belongs to the TtcA family. CTU1/NCS6/ATPBD3 subfamily.

It is found in the cytoplasm. It functions in the pathway tRNA modification; 5-methoxycarbonylmethyl-2-thiouridine-tRNA biosynthesis. Its function is as follows. Plays a central role in 2-thiolation of mcm(5)S(2)U at tRNA wobble positions of tRNA(Lys), tRNA(Glu) and tRNA(Gln). Directly binds tRNAs and probably acts by catalyzing adenylation of tRNAs, an intermediate required for 2-thiolation. It is unclear whether it acts as a sulfurtransferase that transfers sulfur from thiocarboxylated URM1 onto the uridine of tRNAs at wobble position. This chain is Cytoplasmic tRNA 2-thiolation protein 1, found in Caenorhabditis briggsae.